A 495-amino-acid chain; its full sequence is MAKNKIRVRYAPSPTGHLHIGNARTALFNYLFARHNKGTFVIRIEDTDTKRNIADGENSQLDNLKWLGMDWDEGPDKPGNYGPYRQSERREIYTPLIQELVEKGLAYESYKTEDELTAEREAQKAAGEAPRYVYEYEGMSDDEIKASQEAARAKGLQPVVRLRLPKDHVYKFDDIVKGEISFESDRLGGDFVIMKRDGMPTYNFAVVVDDHLMEITHVLRGDDHIANTPKQLAVYEAFGWEPPIFGHMTLIINTETGKKLSKRDESVLQFIEQYRELGYLPEAMFNFIALLGWSPVGESELFNRQEFIKQFDPRRLSKSPASFDQKKLEWVNNQYVKQSDPNKIMDLSLDSLIKAGKIAANPDSKTIEWARHLIALYQDQMSYTAQIVEMSDVFFEEPEQLDAEALEELNNETAPVVLKEFSERLKDLTLFTAPRIMQIIKGIQKDTKIKGRLLYMPIRIATTREMHGPSLPDSIELLGKDRVLAHLEKTLAEIK.

The 'HIGH' region signature appears at 12–22 (PSPTGHLHIGN). The short motif at 259–263 (KLSKR) is the 'KMSKS' region element. Lys-262 provides a ligand contact to ATP.

The protein belongs to the class-I aminoacyl-tRNA synthetase family. Glutamate--tRNA ligase type 1 subfamily. In terms of assembly, monomer.

It is found in the cytoplasm. The enzyme catalyses tRNA(Glu) + L-glutamate + ATP = L-glutamyl-tRNA(Glu) + AMP + diphosphate. In terms of biological role, catalyzes the attachment of glutamate to tRNA(Glu) in a two-step reaction: glutamate is first activated by ATP to form Glu-AMP and then transferred to the acceptor end of tRNA(Glu). The chain is Glutamate--tRNA ligase from Latilactobacillus sakei subsp. sakei (strain 23K) (Lactobacillus sakei subsp. sakei).